The sequence spans 1604 residues: Transposon Ty1-DR4 Gag-Pol polyprotein (1604 aa).

Composition is skewed to polar residues over residues 1–23, 48–60, and 127–152; these read MESQ…SVTS, TKAN…TPAS, and QSQF…GNTF. 3 disordered regions span residues 1 to 93, 126 to 174, and 352 to 421; these read MESQ…MMTQ, PQSQ…PPPM, and GSRN…SKST. Low complexity predominate over residues 153 to 165; that stretch reads TDSSSADSDMTST. An RNA-binding region spans residues 299 to 401; that stretch reads NNGIHINNKV…NSKSKTARAH (103 aa). A compositionally biased stretch (low complexity) spans 402–418; that stretch reads NVSTSNNSPSTDNDSIS. At Ser-416 the chain carries Phosphoserine. Asp-461 (for protease activity; shared with dimeric partner) is an active-site residue. The segment at 583–640 is integrase-type zinc finger-like; it reads NVHTSESTRKYPYPFIHRMLAHANAQTIRYSLKNNTITYFNESDVDWSSAIDYQCPDC. In terms of domain architecture, Integrase catalytic spans 660–835; the sequence is NSYEPFQYLH…AGLDISTLLP (176 aa). The Mg(2+) site is built by Asp-671 and Asp-736. Disordered regions lie at residues 956–1087, 1092–1111, and 1130–1187; these read SKAV…ETEK, RSPS…NIVP, and DLPL…DNET. Residues 960-969 are compositionally biased toward low complexity; the sequence is SPTDSTPPST. Polar residues predominate over residues 1005-1015; sequence STPQISNIEST. Residues 1038 to 1053 show a composition bias toward basic and acidic residues; the sequence is ESSHASKSKDFRHSDS. 2 stretches are compositionally biased toward polar residues: residues 1054 to 1082 and 1101 to 1111; these read YSEN…QISD and PENNSSHNIVP. The Bipartite nuclear localization signal motif lies at 1178 to 1212; that stretch reads KKRSLEDNETEIKVSRDTWNTKNMRSLEPPRSKKR. In terms of domain architecture, Reverse transcriptase Ty1/copia-type spans 1338–1476; it reads NNYYITQLDI…DILGLEIKYQ (139 aa). Mg(2+) contacts are provided by Asp-1346, Asp-1427, and Asp-1428.

As to quaternary structure, the capsid protein forms a homotrimer, from which the VLPs are assembled. The protease is a homodimer, whose active site consists of two apposed aspartic acid residues. Post-translationally, initially, virus-like particles (VLPs) are composed of the structural unprocessed proteins Gag and Gag-Pol, and also contain the host initiator methionine tRNA (tRNA(i)-Met) which serves as a primer for minus-strand DNA synthesis, and a dimer of genomic Ty RNA. Processing of the polyproteins occurs within the particle and proceeds by an ordered pathway, called maturation. First, the protease (PR) is released by autocatalytic cleavage of the Gag-Pol polyprotein yielding capsid protein p45 and a Pol-p154 precursor protein. This cleavage is a prerequisite for subsequent processing of Pol-p154 at the remaining sites to release the mature structural and catalytic proteins. Maturation takes place prior to the RT reaction and is required to produce transposition-competent VLPs.

Its subcellular location is the cytoplasm. It localises to the nucleus. The enzyme catalyses DNA(n) + a 2'-deoxyribonucleoside 5'-triphosphate = DNA(n+1) + diphosphate. It carries out the reaction Endonucleolytic cleavage to 5'-phosphomonoester.. In terms of biological role, capsid protein (CA) is the structural component of the virus-like particle (VLP), forming the shell that encapsulates the retrotransposons dimeric RNA genome. The particles are assembled from trimer-clustered units and there are holes in the capsid shells that allow for the diffusion of macromolecules. CA also has nucleocapsid-like chaperone activity, promoting primer tRNA(i)-Met annealing to the multipartite primer-binding site (PBS), dimerization of Ty1 RNA and initiation of reverse transcription. The aspartyl protease (PR) mediates the proteolytic cleavages of the Gag and Gag-Pol polyproteins after assembly of the VLP. Its function is as follows. Reverse transcriptase/ribonuclease H (RT) is a multifunctional enzyme that catalyzes the conversion of the retro-elements RNA genome into dsDNA within the VLP. The enzyme displays a DNA polymerase activity that can copy either DNA or RNA templates, and a ribonuclease H (RNase H) activity that cleaves the RNA strand of RNA-DNA heteroduplexes during plus-strand synthesis and hydrolyzes RNA primers. The conversion leads to a linear dsDNA copy of the retrotransposon that includes long terminal repeats (LTRs) at both ends. Functionally, integrase (IN) targets the VLP to the nucleus, where a subparticle preintegration complex (PIC) containing at least integrase and the newly synthesized dsDNA copy of the retrotransposon must transit the nuclear membrane. Once in the nucleus, integrase performs the integration of the dsDNA into the host genome. The sequence is that of Transposon Ty1-DR4 Gag-Pol polyprotein (TY1B-DR4) from Saccharomyces cerevisiae (strain ATCC 204508 / S288c) (Baker's yeast).